A 274-amino-acid polypeptide reads, in one-letter code: Diaminopimelate epimerase (274 aa).

Residues N11, Q44, and N64 each coordinate substrate. C73 serves as the catalytic Proton donor. Residues 74 to 75 (GN), N157, N190, and 208 to 209 (ER) contribute to the substrate site. The active-site Proton acceptor is the C217. 218–219 (GS) serves as a coordination point for substrate.

The protein belongs to the diaminopimelate epimerase family. In terms of assembly, homodimer.

The protein localises to the cytoplasm. It carries out the reaction (2S,6S)-2,6-diaminopimelate = meso-2,6-diaminopimelate. The protein operates within amino-acid biosynthesis; L-lysine biosynthesis via DAP pathway; DL-2,6-diaminopimelate from LL-2,6-diaminopimelate: step 1/1. Its function is as follows. Catalyzes the stereoinversion of LL-2,6-diaminopimelate (L,L-DAP) to meso-diaminopimelate (meso-DAP), a precursor of L-lysine and an essential component of the bacterial peptidoglycan. This Escherichia fergusonii (strain ATCC 35469 / DSM 13698 / CCUG 18766 / IAM 14443 / JCM 21226 / LMG 7866 / NBRC 102419 / NCTC 12128 / CDC 0568-73) protein is Diaminopimelate epimerase.